A 367-amino-acid chain; its full sequence is MRVDLFDFDLPPERIALRPVEPRDASRLLVVRPDSGDMTDHGMRELPDFLRAGDVLVVNDTRVIPARLHGFRSRGESRAKIEATLHKREGEALWRAFVKPAKKLRVGETICFARQEPGTEVESLEAEVLEKGAEGEVVLGFNRAGAALDAALDLLGEMPLPPYIAGKRAPDSQDSLDYQTLFANRSGAVAAPTASLHFTPRLIAAIEARGVTICKVTLHVGAGTFLPVKAEDTDAHRMHAEWGEVSAEVAAFLNKVHAAGGRIIAAGTTSLRLLESAVDEDGLIQPFQGETSIFMTPGFRFRAVDILLTNFHLPRSTLFMLVCAFAGLETMRRAYAHAIAASYRFYSYGDACLLFRATRNTSTGAAL.

The protein belongs to the QueA family. As to quaternary structure, monomer.

It is found in the cytoplasm. The enzyme catalyses 7-aminomethyl-7-carbaguanosine(34) in tRNA + S-adenosyl-L-methionine = epoxyqueuosine(34) in tRNA + adenine + L-methionine + 2 H(+). It functions in the pathway tRNA modification; tRNA-queuosine biosynthesis. In terms of biological role, transfers and isomerizes the ribose moiety from AdoMet to the 7-aminomethyl group of 7-deazaguanine (preQ1-tRNA) to give epoxyqueuosine (oQ-tRNA). In Beijerinckia indica subsp. indica (strain ATCC 9039 / DSM 1715 / NCIMB 8712), this protein is S-adenosylmethionine:tRNA ribosyltransferase-isomerase.